A 499-amino-acid chain; its full sequence is Cytochrome P450 monooxygenase ausI (499 aa).

A helical membrane pass occupies residues Pro10–Tyr30. Cys439 is a binding site for heme. A glycan (N-linked (GlcNAc...) asparagine) is linked at Asn483.

This sequence belongs to the cytochrome P450 family. Heme serves as cofactor.

It localises to the membrane. It participates in secondary metabolite biosynthesis; terpenoid biosynthesis. Its function is as follows. Cytochrome P450 monooxygenase; part of the gene cluster B that mediates the biosynthesis of austinol and dehydroaustinol, two fungal meroterpenoids. The first step of the pathway is the synthesis of 3,5-dimethylorsellinic acid by the polyketide synthase ausA. 3,5-dimethylorsellinic acid is then prenylated by the polyprenyl transferase ausN. Further epoxidation by the FAD-dependent monooxygenase ausM and cyclization by the probable terpene cyclase ausL lead to the formation of protoaustinoid A. Protoaustinoid A is then oxidized to spiro-lactone preaustinoid A3 by the combined action of the FAD-binding monooxygenases ausB and ausC, and the dioxygenase ausE. Acid-catalyzed keto-rearrangement and ring contraction of the tetraketide portion of preaustinoid A3 by ausJ lead to the formation of preaustinoid A4. The aldo-keto reductase ausK, with the help of ausH, is involved in the next step by transforming preaustinoid A4 into isoaustinone which is in turn hydroxylated by the P450 monooxygenase ausI to form austinolide. Finally, the cytochrome P450 monooxygenase ausG modifies austinolide to austinol. Austinol can be further modified to dehydroaustinol which forms a diffusible complex with diorcinol that initiates conidiation. Due to genetic rearrangements of the clusters and the subsequent loss of some enzymes, the end products of the Emericella nidulans austinoid biosynthesis clusters are austinol and dehydroaustinol, even if additional enzymes, such as the O-acetyltransferase ausQ and the cytochrome P450 monooxygenase ausR are still functional. The sequence is that of Cytochrome P450 monooxygenase ausI from Emericella nidulans (strain FGSC A4 / ATCC 38163 / CBS 112.46 / NRRL 194 / M139) (Aspergillus nidulans).